The primary structure comprises 162 residues: Phosphopantetheine adenylyltransferase (162 aa).

Substrate is bound at residue Ser11. ATP contacts are provided by residues 11–12 (SF) and His19. The substrate site is built by Lys43, Val76, and Arg90. ATP contacts are provided by residues 91–93 (GLR), Glu101, and 126–132 (HLYISSS).

Belongs to the bacterial CoaD family. As to quaternary structure, homohexamer. Mg(2+) serves as cofactor.

The protein localises to the cytoplasm. It catalyses the reaction (R)-4'-phosphopantetheine + ATP + H(+) = 3'-dephospho-CoA + diphosphate. It participates in cofactor biosynthesis; coenzyme A biosynthesis; CoA from (R)-pantothenate: step 4/5. Reversibly transfers an adenylyl group from ATP to 4'-phosphopantetheine, yielding dephospho-CoA (dPCoA) and pyrophosphate. The sequence is that of Phosphopantetheine adenylyltransferase from Streptococcus pneumoniae (strain Hungary19A-6).